The following is a 188-amino-acid chain: Elongation factor P (188 aa).

An N6-(3,6-diaminohexanoyl)-5-hydroxylysine modification is found at K34.

The protein belongs to the elongation factor P family. In terms of processing, may be beta-lysylated on the epsilon-amino group of Lys-34 by the combined action of EpmA and EpmB, and then hydroxylated on the C5 position of the same residue by EpmC (if this protein is present). Lysylation is critical for the stimulatory effect of EF-P on peptide-bond formation. The lysylation moiety may extend toward the peptidyltransferase center and stabilize the terminal 3-CCA end of the tRNA. Hydroxylation of the C5 position on Lys-34 may allow additional potential stabilizing hydrogen-bond interactions with the P-tRNA.

The protein localises to the cytoplasm. Its pathway is protein biosynthesis; polypeptide chain elongation. Functionally, involved in peptide bond synthesis. Alleviates ribosome stalling that occurs when 3 or more consecutive Pro residues or the sequence PPG is present in a protein, possibly by augmenting the peptidyl transferase activity of the ribosome. Modification of Lys-34 is required for alleviation. This chain is Elongation factor P, found in Methylococcus capsulatus (strain ATCC 33009 / NCIMB 11132 / Bath).